Consider the following 956-residue polypeptide: Phosphatidylinositol 4-kinase PIK1a (956 aa).

The PIK helical domain occupies 1–120 (MPVAPHELRD…QTVRKFINKL (120 aa)). Residues 545-573 (SRDWAKSTPGSPVARSSQEDEKFYGNVSS) are disordered. A PI3K/PI4K catalytic domain is found at 658–939 (EDWNEKKHRI…YLIEKSVGSM (282 aa)). The tract at residues 664-670 (KHRIRKS) is G-loop. Positions 805 to 813 (QIKDRHNGN) are catalytic loop. The tract at residues 824 to 848 (HIDFGFLLSNSPGSVGFEAAPFKLT) is activation loop.

Belongs to the PI3/PI4-kinase family. Type III PI4K subfamily.

The protein localises to the nucleus. The catalysed reaction is a 1,2-diacyl-sn-glycero-3-phospho-(1D-myo-inositol) + ATP = a 1,2-diacyl-sn-glycero-3-phospho-(1D-myo-inositol 4-phosphate) + ADP + H(+). In terms of biological role, acts on phosphatidylinositol (PI) in the first committed step in the production of the second messenger inositol 1,4,5,-trisphosphate. The sequence is that of Phosphatidylinositol 4-kinase PIK1a (PIKA) from Candida albicans (strain SC5314 / ATCC MYA-2876) (Yeast).